The chain runs to 383 residues: uncharacterized protein (383 aa).

This sequence belongs to the peptidase M20 family.

This is an uncharacterized protein from Staphylococcus aureus (strain USA300).